The chain runs to 703 residues: Harmonin-binding protein USHBP1 (703 aa).

Over residues 1-15 (MSARATRPRSRRGRH) the composition is skewed to basic residues. Disordered regions lie at residues 1 to 113 (MSAR…PPGN) and 138 to 172 (HQPP…CQRE). Positions 189–227 (SREDELVRTQASLEAIRAEKETLQKEVQELQDSLLRLEP) form a coiled coil. The disordered stretch occupies residues 228-256 (CPHLSHNQAGGSGSGSSSSEADREPWETQ). Residues 289–309 (EMHIMEAQMEQLRGSIEKLKC) are a coiled coil. The segment at 396 to 416 (MDAGAQQNPQPSPEGSSVDKP) is disordered. The span at 400–410 (AQQNPQPSPEG) shows a compositional bias: polar residues. Residues 476–513 (RLEKTQIQQDLVAAREALADLMLRLQLVRREKRGLELR) are a coiled coil. Residues 540–583 (AGGANSSGGHSSGGGSSGDEEEWYQGLPAVPGGTSGIDGGQVGR) are disordered. Residues 572 to 581 (GTSGIDGGQV) are compositionally biased toward gly residues. Positions 596–681 (ASLTRTLDLQ…QAEEVAVLEA (86 aa)) form a coiled coil.

This sequence belongs to the MCC family. Interacts via its C-terminus with the first PDZ domain of USH1C. Highest level of expression in heart, and moderate to low expression in skeletal muscle, kidney, liver, small intestine, placenta and lung.

This chain is Harmonin-binding protein USHBP1, found in Homo sapiens (Human).